A 483-amino-acid polypeptide reads, in one-letter code: Zinc finger CCCH domain-containing protein 25 (483 aa).

The C3H1-type zinc finger occupies 157 to 184 (RNRAHICSFFIRGECTRGDECPYRHEMP). Residues 228–301 (RTLYVGGLNS…QRLKLTWGRP (74 aa)) enclose the RRM domain. 2 disordered regions span residues 298–317 (WGRP…QGSV) and 336–483 (PPML…GSSQ). Residues 336 to 351 (PPMLQYYMHPPPPQPP) are compositionally biased toward pro residues. Residues 370–380 (SSSKESGSSTS) are compositionally biased toward low complexity. A compositionally biased stretch (polar residues) spans 381-391 (DNRGASSSSYT). 2 stretches are compositionally biased toward low complexity: residues 392 to 401 (MPPHGHYPQH) and 409 to 423 (YGGY…YPPY). A compositionally biased stretch (pro residues) spans 438 to 459 (QPGPGSRPNPPHPSSVSAPPPD). Positions 460–476 (SVSAAPSGSSQQSADAA) are enriched in low complexity.

The chain is Zinc finger CCCH domain-containing protein 25 from Arabidopsis thaliana (Mouse-ear cress).